A 418-amino-acid chain; its full sequence is Probable serine hydroxymethyltransferase (418 aa).

(6S)-5,6,7,8-tetrahydrofolate contacts are provided by residues Leu-118 and 122–124 (GHL). Lys-226 bears the N6-(pyridoxal phosphate)lysine mark. 351–353 (SPF) is a (6S)-5,6,7,8-tetrahydrofolate binding site.

This sequence belongs to the SHMT family. In terms of assembly, homodimer. Requires pyridoxal 5'-phosphate as cofactor.

The protein resides in the cytoplasm. The enzyme catalyses (6R)-5,10-methylene-5,6,7,8-tetrahydrofolate + glycine + H2O = (6S)-5,6,7,8-tetrahydrofolate + L-serine. It functions in the pathway one-carbon metabolism; tetrahydrofolate interconversion. Its function is as follows. Catalyzes the reversible interconversion of serine and glycine with tetrahydrofolate (THF) serving as the one-carbon carrier. This reaction serves as the major source of one-carbon groups required for the biosynthesis of purines, thymidylate, methionine, and other important biomolecules. In Mesomycoplasma hyopneumoniae (strain J / ATCC 25934 / NCTC 10110) (Mycoplasma hyopneumoniae), this protein is Probable serine hydroxymethyltransferase.